A 214-amino-acid chain; its full sequence is Octanoyltransferase (214 aa).

Residues 35-211 (KSNIDFIWLG…IIQEEFYFNF (177 aa)) enclose the BPL/LPL catalytic domain. Substrate is bound by residues 75–82 (RGGEVTCH), 142–144 (SIG), and 155–157 (GFS). Cys173 functions as the Acyl-thioester intermediate in the catalytic mechanism.

It belongs to the LipB family.

It localises to the cytoplasm. The enzyme catalyses octanoyl-[ACP] + L-lysyl-[protein] = N(6)-octanoyl-L-lysyl-[protein] + holo-[ACP] + H(+). It functions in the pathway protein modification; protein lipoylation via endogenous pathway; protein N(6)-(lipoyl)lysine from octanoyl-[acyl-carrier-protein]: step 1/2. Catalyzes the transfer of endogenously produced octanoic acid from octanoyl-acyl-carrier-protein onto the lipoyl domains of lipoate-dependent enzymes. Lipoyl-ACP can also act as a substrate although octanoyl-ACP is likely to be the physiological substrate. The protein is Octanoyltransferase of Prochlorococcus marinus (strain MIT 9515).